The primary structure comprises 351 residues: Meiotically up-regulated gene 1 protein (351 aa).

The protein localises to the cytoplasm. Its function is as follows. Required for correct meiotic chromosome segregation. The chain is Meiotically up-regulated gene 1 protein (mug1) from Schizosaccharomyces pombe (strain 972 / ATCC 24843) (Fission yeast).